The chain runs to 321 residues: 4-hydroxy-2-oxoglutarate aldolase, mitochondrial (321 aa).

The N-terminal 23 residues, 1–23 (MLGPQIWASMRQGLSRGLSRNVK), are a transit peptide targeting the mitochondrion. Residue 71–72 (ST) coordinates substrate. Lysine 190 acts as the Schiff-base intermediate with substrate in catalysis. The substrate site is built by serine 192 and glycine 216.

The protein belongs to the DapA family. As to quaternary structure, homotetramer.

It is found in the mitochondrion. The catalysed reaction is (4S)-4-hydroxy-2-oxoglutarate = glyoxylate + pyruvate. The enzyme catalyses (4R)-4-hydroxy-2-oxoglutarate = glyoxylate + pyruvate. Inhibited by divalent cations. In terms of biological role, catalyzes the final step in the metabolic pathway of hydroxyproline. This is 4-hydroxy-2-oxoglutarate aldolase, mitochondrial (Hoga1) from Mus musculus (Mouse).